Here is a 550-residue protein sequence, read N- to C-terminus: Hydroxylamine reductase (550 aa).

4 residues coordinate [2Fe-2S] cluster: Cys3, Cys6, Cys18, and Cys25. Positions 249, 273, 317, 405, 433, 458, 492, and 494 each coordinate hybrid [4Fe-2O-2S] cluster. A Cysteine persulfide modification is found at Cys405.

Belongs to the HCP family. The cofactor is [2Fe-2S] cluster. Requires hybrid [4Fe-2O-2S] cluster as cofactor.

The protein localises to the cytoplasm. The catalysed reaction is A + NH4(+) + H2O = hydroxylamine + AH2 + H(+). In terms of biological role, catalyzes the reduction of hydroxylamine to form NH(3) and H(2)O. The chain is Hydroxylamine reductase from Escherichia coli (strain SE11).